Reading from the N-terminus, the 150-residue chain is Histone deacetylase complex subunit SAP18 (150 aa).

It belongs to the SAP18 family. As to quaternary structure, forms a complex with SIN3 and histone deacetylase. Interacts with the N-terminal residues of TRL. Interacts with BCD; in vitro and yeast cells.

It localises to the nucleus. The protein localises to the cytoplasm. Involved in the tethering of the SIN3 complex to core histone proteins. Interacts with bicoid (bcd) to repress transcription of bicoid target genes in the anterior tip of the embryo; a process known as retraction. Interacts with Trl and binds to Polycomb response elements at the bithorax complex. May contribute to the regulation of other homeotic gene expressions. In Drosophila melanogaster (Fruit fly), this protein is Histone deacetylase complex subunit SAP18 (Bin1).